The chain runs to 345 residues: Phosphoribosylformylglycinamidine cyclo-ligase (345 aa).

The protein belongs to the AIR synthase family.

Its subcellular location is the cytoplasm. It carries out the reaction 2-formamido-N(1)-(5-O-phospho-beta-D-ribosyl)acetamidine + ATP = 5-amino-1-(5-phospho-beta-D-ribosyl)imidazole + ADP + phosphate + H(+). The protein operates within purine metabolism; IMP biosynthesis via de novo pathway; 5-amino-1-(5-phospho-D-ribosyl)imidazole from N(2)-formyl-N(1)-(5-phospho-D-ribosyl)glycinamide: step 2/2. This chain is Phosphoribosylformylglycinamidine cyclo-ligase, found in Bifidobacterium longum (strain DJO10A).